Reading from the N-terminus, the 108-residue chain is UPF0060 membrane protein DSY4629 (108 aa).

Transmembrane regions (helical) follow at residues 5 to 25 (IILFILAGLAEIGGGYLVWLW), 31 to 51 (PFWYGIIGGLILVLYGVIPTL), 60 to 80 (VYAAYGGVFVILAVLWGWGID), and 86 to 106 (NYDWIGAVICLVGVSVMLWAP).

This sequence belongs to the UPF0060 family.

Its subcellular location is the cell membrane. The sequence is that of UPF0060 membrane protein DSY4629 from Desulfitobacterium hafniense (strain Y51).